The chain runs to 424 residues: UDP-N-acetylglucosamine 1-carboxyvinyltransferase (424 aa).

Lys-22–Asn-23 contacts phosphoenolpyruvate. Arg-93 is a UDP-N-acetyl-alpha-D-glucosamine binding site. Cys-117 functions as the Proton donor in the catalytic mechanism. 2-(S-cysteinyl)pyruvic acid O-phosphothioketal is present on Cys-117. UDP-N-acetyl-alpha-D-glucosamine is bound by residues Lys-162–Val-165, Asp-307, and Ile-329.

It belongs to the EPSP synthase family. MurA subfamily.

It is found in the cytoplasm. It catalyses the reaction phosphoenolpyruvate + UDP-N-acetyl-alpha-D-glucosamine = UDP-N-acetyl-3-O-(1-carboxyvinyl)-alpha-D-glucosamine + phosphate. The protein operates within cell wall biogenesis; peptidoglycan biosynthesis. Its function is as follows. Cell wall formation. Adds enolpyruvyl to UDP-N-acetylglucosamine. The protein is UDP-N-acetylglucosamine 1-carboxyvinyltransferase of Actinobacillus pleuropneumoniae serotype 3 (strain JL03).